The primary structure comprises 230 residues: Ureidoacrylate amidohydrolase RutB (230 aa).

The active-site Proton acceptor is the Asp24. Lys133 is a catalytic residue. Cys166 acts as the Nucleophile in catalysis.

The protein belongs to the isochorismatase family. RutB subfamily.

It carries out the reaction (Z)-3-ureidoacrylate + H2O + H(+) = (Z)-3-aminoacrylate + NH4(+) + CO2. It catalyses the reaction (Z)-3-ureidoacrylate + H2O = (Z)-3-aminoacrylate + carbamate + H(+). The catalysed reaction is (Z)-2-methylureidoacrylate + H2O + H(+) = (Z)-2-methylaminoacrylate + NH4(+) + CO2. In terms of biological role, hydrolyzes ureidoacrylate to form aminoacrylate and carbamate. The carbamate hydrolyzes spontaneously, thereby releasing one of the nitrogen atoms of the pyrimidine ring as ammonia and one of its carbon atoms as CO2. The chain is Ureidoacrylate amidohydrolase RutB from Escherichia coli O111:H- (strain 11128 / EHEC).